We begin with the raw amino-acid sequence, 218 residues long: Sodium channel regulatory subunit beta-1 (218 aa).

The signal sequence occupies residues 1–18; the sequence is MGRLLALVVGAALVSSAC. Over 19-157 the chain is Extracellular; sequence GGCVEVDSET…DKANRDMASI (139 aa). Disulfide bonds link Cys21/Cys43 and Cys40/Cys121. In terms of domain architecture, Ig-like C2-type spans 22–150; that stretch reads VEVDSETEAV…KIHIEVVDKA (129 aa). 4 N-linked (GlcNAc...) asparagine glycosylation sites follow: Asn93, Asn110, Asn114, and Asn135. The chain crosses the membrane as a helical span at residues 158-179; that stretch reads VSEIMMYVLIVVLTIWLVAEMI. Residues 180-218 lie on the Cytoplasmic side of the membrane; that stretch reads YCYKKIAAATETAAQENASEYLAITSESKENCTGVQVAE.

The protein belongs to the sodium channel auxiliary subunit SCN1B (TC 8.A.17) family. In terms of assembly, voltage-gated sodium (Nav) channel consists of an ion-conducting pore-forming alpha subunit functional on its own that is regulated by one or more beta subunits. Interacts with SCN1A; regulatory subunit of SCN1A/Nav1.1. Interacts with SCN3A; regulatory subunit of SCN3A/Nav1.3. Interacts with SCN4A; regulatory subunit of SCN4A/Nav1.4. Interacts with SCN5A; regulatory subunit of SCN5A/Nav1.5. Interacts with SCN8A; regulatory subunit of SCN8A/Nav1.6. Interacts with SCN9A; regulatory subunit of SCN9A/Nav1.7. Interacts with SCN10A; regulatory subunit of SCN10A/Nav1.8. Interacts with NFASC. Interacts with TMEM65. As to expression, the overall expression of isoform 1 and isoform 2 is very similar. Isoform 1 is abundantly expressed in skeletal muscle, heart and brain. Isoform 2 is highly expressed in brain and skeletal muscle and present at a very low level in heart, placenta, lung, liver, kidney and pancreas. In brain, isoform 2 is most abundant in the cerebellum, followed by the cerebral cortex and occipital lobe, while isoform 1 levels are higher in the cortex compared to the cerebellum. Isoform 2 is expressed in many regions of the brain, including cerebellar Purkinje cells, cortex pyramidal neurons and many of the neuronal fibers throughout the brain (at protein level). Also detected in dorsal root ganglion, in fibers of the spinal nerve and in cortical neurons and their processes (at protein level).

Its subcellular location is the cell membrane. It localises to the perikaryon. The protein localises to the cell projection. It is found in the axon. The protein resides in the secreted. Regulatory subunit of multiple voltage-gated sodium (Nav) channels directly mediating the depolarization of excitable membranes. Navs, also called VGSCs (voltage-gated sodium channels) or VDSCs (voltage-dependent sodium channels), operate by switching between closed and open conformations depending on the voltage difference across the membrane. In the open conformation they allow Na(+) ions to selectively pass through the pore, along their electrochemical gradient. The influx of Na+ ions provokes membrane depolarization, initiating the propagation of electrical signals throughout cells and tissues. The accessory beta subunits participate in localization and functional modulation of the Nav channels. Modulates the activity of SCN1A/Nav1.1, SCN2A/Nav1.2, SCN3A/Nav1.3, SCN4A/Nav1.4, SCN5A/Nav1.5, SCN8A/Nav1.6, SCN9A/Nav1.7 and SCN10A/Nav1.8. In terms of biological role, cell adhesion molecule that plays a critical role in neuronal migration and pathfinding during brain development. Stimulates neurite outgrowth. Has no regulatory function on the SCN2A sodium channel complex. The polypeptide is Sodium channel regulatory subunit beta-1 (Homo sapiens (Human)).